A 431-amino-acid polypeptide reads, in one-letter code: Ribosomal RNA small subunit methyltransferase B (431 aa).

Residues 254 to 260 (CAAPGGK), Asp277, Asp303, and Asp322 contribute to the S-adenosyl-L-methionine site. Cys375 acts as the Nucleophile in catalysis.

This sequence belongs to the class I-like SAM-binding methyltransferase superfamily. RsmB/NOP family.

The protein resides in the cytoplasm. The catalysed reaction is cytidine(967) in 16S rRNA + S-adenosyl-L-methionine = 5-methylcytidine(967) in 16S rRNA + S-adenosyl-L-homocysteine + H(+). Its function is as follows. Specifically methylates the cytosine at position 967 (m5C967) of 16S rRNA. This Klebsiella pneumoniae subsp. pneumoniae (strain ATCC 700721 / MGH 78578) protein is Ribosomal RNA small subunit methyltransferase B.